The sequence spans 160 residues: Ubiquitin-conjugating enzyme E2 16 (160 aa).

The region spanning serine 3–lysine 153 is the UBC core domain. Cysteine 90 (glycyl thioester intermediate) is an active-site residue.

The protein belongs to the ubiquitin-conjugating enzyme family.

It catalyses the reaction S-ubiquitinyl-[E1 ubiquitin-activating enzyme]-L-cysteine + [E2 ubiquitin-conjugating enzyme]-L-cysteine = [E1 ubiquitin-activating enzyme]-L-cysteine + S-ubiquitinyl-[E2 ubiquitin-conjugating enzyme]-L-cysteine.. It functions in the pathway protein modification; protein ubiquitination. In terms of biological role, catalyzes the covalent attachment of ubiquitin to other proteins. This chain is Ubiquitin-conjugating enzyme E2 16 (ubc16), found in Schizosaccharomyces pombe (strain 972 / ATCC 24843) (Fission yeast).